Reading from the N-terminus, the 485-residue chain is NADH-quinone oxidoreductase subunit N (485 aa).

14 consecutive transmembrane segments (helical) span residues 8–28 (LIAL…MLSI), 35–55 (FLNA…LWFV), 75–95 (LYTG…YPWL), 105–125 (FYLL…ANHL), 127–147 (SLFL…GYAF), 159–179 (YTIL…LVYA), 203–223 (LLAG…LVPF), 235–255 (PAPV…GVVM), 271–291 (VVLG…ALTQ), 297–317 (LLGY…IALK), 326–346 (VGVY…VVSL), 374–394 (AVMT…GFIG), 408–427 (WWLT…YYLR), and 455–475 (VVVL…QPLI).

This sequence belongs to the complex I subunit 2 family. As to quaternary structure, NDH-1 is composed of 13 different subunits. Subunits NuoA, H, J, K, L, M, N constitute the membrane sector of the complex.

The protein localises to the cell inner membrane. The enzyme catalyses a quinone + NADH + 5 H(+)(in) = a quinol + NAD(+) + 4 H(+)(out). NDH-1 shuttles electrons from NADH, via FMN and iron-sulfur (Fe-S) centers, to quinones in the respiratory chain. The immediate electron acceptor for the enzyme in this species is believed to be ubiquinone. Couples the redox reaction to proton translocation (for every two electrons transferred, four hydrogen ions are translocated across the cytoplasmic membrane), and thus conserves the redox energy in a proton gradient. This chain is NADH-quinone oxidoreductase subunit N, found in Cronobacter sakazakii (strain ATCC BAA-894) (Enterobacter sakazakii).